Here is a 468-residue protein sequence, read N- to C-terminus: ATP synthase subunit beta (468 aa).

Residue 155 to 162 coordinates ATP; it reads GGAGVGKT.

Belongs to the ATPase alpha/beta chains family. F-type ATPases have 2 components, CF(1) - the catalytic core - and CF(0) - the membrane proton channel. CF(1) has five subunits: alpha(3), beta(3), gamma(1), delta(1), epsilon(1). CF(0) has three main subunits: a(1), b(2) and c(9-12). The alpha and beta chains form an alternating ring which encloses part of the gamma chain. CF(1) is attached to CF(0) by a central stalk formed by the gamma and epsilon chains, while a peripheral stalk is formed by the delta and b chains.

The protein localises to the cell membrane. The enzyme catalyses ATP + H2O + 4 H(+)(in) = ADP + phosphate + 5 H(+)(out). Produces ATP from ADP in the presence of a proton gradient across the membrane. The catalytic sites are hosted primarily by the beta subunits. The chain is ATP synthase subunit beta from Streptococcus pyogenes serotype M6 (strain ATCC BAA-946 / MGAS10394).